The following is a 506-amino-acid chain: Sucrose transport protein SUT3 (506 aa).

At 1-20 the chain is on the cytoplasmic side; the sequence is MAVDMELDGGGDGKGKAPPQ. A helical transmembrane segment spans residues 21 to 41; that stretch reads ISLSGLFLACMVAGGVQYGWA. Over 42–54 the chain is Extracellular; sequence LQLSLLTPYVQTL. The helical transmembrane segment at 55-75 threads the bilayer; the sequence is GIPHALTSVMWLCGPIAGLIV. Residues 76-94 lie on the Cytoplasmic side of the membrane; that stretch reads QPCVGLYSDKCTSSLGRRR. Residues 95 to 115 traverse the membrane as a helical segment; that stretch reads PFILTGCIIICISVIVIGFSS. The Extracellular portion of the chain corresponds to 116-135; sequence DIGYALGDTTEDCKVYRGPR. The chain crosses the membrane as a helical span at residues 136–156; the sequence is YHAAAAFILGFWLLDFSNNTV. Residues 157–171 are Cytoplasmic-facing; sequence QGPARALMADLSGRH. The chain crosses the membrane as a helical span at residues 172–192; that stretch reads GPSAANAIFCSWMALGNILGY. Topologically, residues 193–220 are extracellular; it reads SSGSTNDWHKWFPFLMTRACCEACANLK. Residues 221–241 traverse the membrane as a helical segment; the sequence is AAFLVAVVFLGLSTAVTMVFA. The Cytoplasmic segment spans residues 242–275; it reads REVALDPVAAAKRNEGEASGLLAVFKGMKNLPVG. Residues 276–296 traverse the membrane as a helical segment; it reads MPSVLIVTGLTWLSWFPFILF. The Extracellular segment spans residues 297-327; it reads DTDWMGREIYHGRPDGSPAEVTAFQEGVRQG. Residues 328-348 traverse the membrane as a helical segment; the sequence is AFGLLLNSIVLGISSFLIEPM. Topologically, residues 349–355 are cytoplasmic; sequence CRRLGAR. The helical transmembrane segment at 356–376 threads the bilayer; it reads AVWVMSSAVVCVAMAAVSVLS. The Extracellular portion of the chain corresponds to 377 to 404; it reads AWSLGDFGGSVQDAARAPAEEGGVRASA. Residues 405-425 traverse the membrane as a helical segment; the sequence is LALFVFLGLPFAVLCSVPFAV. Residues 426 to 441 lie on the Cytoplasmic side of the membrane; sequence TAQLAASRGGGQGLCT. The chain crosses the membrane as a helical span at residues 442-462; that stretch reads GVLNISIVVPQMAIALGAGPW. Residues 463 to 470 lie on the Extracellular side of the membrane; that stretch reads DELFGEGN. A helical membrane pass occupies residues 471 to 491; it reads IPAFAMASVFAAAAAAAGVVL. Residues 492–506 are Cytoplasmic-facing; that stretch reads LPKVSVRSVSMAGGH.

It belongs to the glycoside-pentoside-hexuronide (GPH) cation symporter transporter (TC 2.A.2.4) family. As to quaternary structure, homodimer. Widely expressed. Highest expression in sink leaves and lowest in germinating seeds.

The protein localises to the cell membrane. The protein operates within glycan biosynthesis; sucrose metabolism. In terms of biological role, responsible for the transport of sucrose into the cell, with the concomitant uptake of protons (symport system). May also transport other glucosides. The protein is Sucrose transport protein SUT3 (SUT3) of Oryza sativa subsp. japonica (Rice).